The following is a 505-amino-acid chain: Salutaridine synthase (505 aa).

The helical transmembrane segment at 10–30 threads the bilayer; it reads DFWMIACTVIIVFALVKFMFS. Cys-444 is a binding site for heme.

Belongs to the cytochrome P450 family. Heme serves as cofactor.

It localises to the endoplasmic reticulum membrane. The catalysed reaction is (R)-reticuline + reduced [NADPH--hemoprotein reductase] + O2 = salutaridine + oxidized [NADPH--hemoprotein reductase] + 2 H2O + H(+). In terms of biological role, cytochrome P450 monooxygenase involved in biosynthesis of morphinan-type benzylisoquinoline and opiate alkaloids natural products. Catalyzes the formation of the morphinan alkaloid salutaridine by intramolecular phenol oxidation of (R)-reticuline without the incorporation of oxygen into the product. Can also use (R)-norreticuline as substrate. The polypeptide is Salutaridine synthase (Papaver somniferum (Opium poppy)).